The following is a 459-amino-acid chain: Cysteine--tRNA ligase (459 aa).

Cys-29 lines the Zn(2+) pocket. The 'HIGH' region motif lies at 31-41 (PTVYDRAHIGN). Zn(2+) contacts are provided by Cys-209, His-234, and Glu-238. The 'KMSKS' region motif lies at 266-270 (KMSKS). Lys-269 contributes to the ATP binding site.

It belongs to the class-I aminoacyl-tRNA synthetase family. In terms of assembly, monomer. Zn(2+) is required as a cofactor.

It is found in the cytoplasm. The enzyme catalyses tRNA(Cys) + L-cysteine + ATP = L-cysteinyl-tRNA(Cys) + AMP + diphosphate. This is Cysteine--tRNA ligase from Paramagnetospirillum magneticum (strain ATCC 700264 / AMB-1) (Magnetospirillum magneticum).